A 97-amino-acid chain; its full sequence is MNQENPPPYPGPGPTAPYPPYPPQPMGPGPMGGPYPPPQGYPYQGYPQYGWQGGPQEPPKTTVYVVEDQRRDELGPSTCLTACWTALCCCCLWDMLT.

The span at 1-40 (MNQENPPPYPGPGPTAPYPPYPPQPMGPGPMGGPYPPPQG) shows a compositional bias: pro residues. The segment at 1–61 (MNQENPPPYP…QGGPQEPPKT (61 aa)) is disordered. A compositionally biased stretch (low complexity) spans 41–50 (YPYQGYPQYG). The helical transmembrane segment at 74-91 (LGPSTCLTACWTALCCCC) threads the bilayer.

Belongs to the CYSTM1 family.

It is found in the membrane. The sequence is that of Cysteine-rich and transmembrane domain-containing protein 1 (CYSTM1) from Homo sapiens (Human).